Here is a 168-residue protein sequence, read N- to C-terminus: Outer-membrane lipoprotein YfiB (168 aa).

The N-terminal stretch at 1-25 (MLPQRLHPSRLLALALFSLVLGLAG) is a signal peptide. Cys26 carries N-palmitoyl cysteine lipidation. A lipid anchor (S-diacylglycerol cysteine) is attached at Cys26. The OmpA-like domain occupies 53–168 (EGWEFGMSSK…RRVAIIVPAE (116 aa)).

The protein belongs to the outer membrane OOP (TC 1.B.6) superfamily. In terms of assembly, homodimer. Interacts with YfiR. The YfiB-YfiR complex is a 2:2 heterotetramer.

The protein localises to the cell outer membrane. Both lipid anchor in the outer membrane and peptidoglycan binding are required for full activity. Once activated by certain cell stress, the dimeric YfiB transforms from a compact conformation to a stretched conformation, allowing the periplasmic domain of the membrane-anchored YfiB to penetrate the cell wall and sequester the YfiR dimer. GMP enhances the binding affinity between YfiB and YfiR. In terms of biological role, activates the diguanylate cyclase TpbB/YfiN by sequestering YfiR at the outer membrane, which counteracts the YfiR-mediated repression of TpbB/YfiN at the inner membrane and leads to increased c-di-GMP production. May act as a sensor of envelope stress. Part of the YfiB-TpbB-YfiR (or yfiBNR) system, encoding a tripartite signaling module that modulates intracellular c-di-GMP levels. The system is a key regulator of the small colony variant (SCV) phenotype, and plays an important role in biofilm formation and in vivo persistence. The c-di-GMP produced by TpbB/YfiN stimulates the production of the Pel and Psl exopolysaccharides, which promotes surface attachment, generates an SCV phenotype and confers resistance against phagocytosis. The chain is Outer-membrane lipoprotein YfiB from Pseudomonas aeruginosa (strain ATCC 15692 / DSM 22644 / CIP 104116 / JCM 14847 / LMG 12228 / 1C / PRS 101 / PAO1).